A 204-amino-acid polypeptide reads, in one-letter code: dITP/XTP pyrophosphatase (204 aa).

11–16 (SRNRKK) lines the substrate pocket. Asp76 (proton acceptor) is an active-site residue. Residue Asp76 participates in Mg(2+) binding. Residues Ser77, 158-161 (FGYD), Lys181, and 186-187 (HR) each bind substrate.

The protein belongs to the HAM1 NTPase family. In terms of assembly, homodimer. The cofactor is Mg(2+).

The catalysed reaction is XTP + H2O = XMP + diphosphate + H(+). It carries out the reaction dITP + H2O = dIMP + diphosphate + H(+). The enzyme catalyses ITP + H2O = IMP + diphosphate + H(+). Its function is as follows. Pyrophosphatase that catalyzes the hydrolysis of nucleoside triphosphates to their monophosphate derivatives, with a high preference for the non-canonical purine nucleotides XTP (xanthosine triphosphate), dITP (deoxyinosine triphosphate) and ITP. Seems to function as a house-cleaning enzyme that removes non-canonical purine nucleotides from the nucleotide pool, thus preventing their incorporation into DNA/RNA and avoiding chromosomal lesions. In Mycobacterium tuberculosis (strain CDC 1551 / Oshkosh), this protein is dITP/XTP pyrophosphatase.